A 462-amino-acid chain; its full sequence is Glucose N-acetyltransferase 1 (462 aa).

Residues Met1 to Lys18 lie on the Cytoplasmic side of the membrane. Residues Val19 to Glu35 form a helical; Signal-anchor for type II membrane protein membrane-spanning segment. The Lumenal segment spans residues Thr36–Ala462. The short motif at Asp171–Asp173 is the DXD element.

Belongs to the GNT1 family.

It is found in the golgi apparatus membrane. It localises to the vacuole membrane. In terms of biological role, N-acetylglucosaminyltransferase involved in the Golgi-specific modification of N-linked glycans. This chain is Glucose N-acetyltransferase 1 (GNT1), found in Candida albicans (strain SC5314 / ATCC MYA-2876) (Yeast).